The following is a 275-amino-acid chain: 3-methyl-2-oxobutanoate hydroxymethyltransferase (275 aa).

Positions 44 and 83 each coordinate Mg(2+). Residues 44–45 (DS), Asp-83, and Lys-113 contribute to the 3-methyl-2-oxobutanoate site. Mg(2+) is bound at residue Glu-115. The Proton acceptor role is filled by Glu-182.

It belongs to the PanB family. In terms of assembly, homodecamer; pentamer of dimers. The cofactor is Mg(2+).

Its subcellular location is the cytoplasm. It carries out the reaction 3-methyl-2-oxobutanoate + (6R)-5,10-methylene-5,6,7,8-tetrahydrofolate + H2O = 2-dehydropantoate + (6S)-5,6,7,8-tetrahydrofolate. It functions in the pathway cofactor biosynthesis; (R)-pantothenate biosynthesis; (R)-pantoate from 3-methyl-2-oxobutanoate: step 1/2. In terms of biological role, catalyzes the reversible reaction in which hydroxymethyl group from 5,10-methylenetetrahydrofolate is transferred onto alpha-ketoisovalerate to form ketopantoate. The sequence is that of 3-methyl-2-oxobutanoate hydroxymethyltransferase from Clostridium beijerinckii (strain ATCC 51743 / NCIMB 8052) (Clostridium acetobutylicum).